Consider the following 351-residue polypeptide: Holliday junction branch migration complex subunit RuvB (351 aa).

A large ATPase domain (RuvB-L) region spans residues Met1 to Tyr186. Residues Ile25, Arg26, Gly67, Lys70, Thr71, Thr72, Glu133–Phe135, Arg176, Tyr186, and Arg223 each bind ATP. Residue Thr71 participates in Mg(2+) binding. The tract at residues Arg187–Asn257 is small ATPAse domain (RuvB-S). The interval Ile260 to Glu351 is head domain (RuvB-H). 3 residues coordinate DNA: Arg296, Arg315, and Arg320.

This sequence belongs to the RuvB family. As to quaternary structure, homohexamer. Forms an RuvA(8)-RuvB(12)-Holliday junction (HJ) complex. HJ DNA is sandwiched between 2 RuvA tetramers; dsDNA enters through RuvA and exits via RuvB. An RuvB hexamer assembles on each DNA strand where it exits the tetramer. Each RuvB hexamer is contacted by two RuvA subunits (via domain III) on 2 adjacent RuvB subunits; this complex drives branch migration. In the full resolvosome a probable DNA-RuvA(4)-RuvB(12)-RuvC(2) complex forms which resolves the HJ.

It localises to the cytoplasm. It carries out the reaction ATP + H2O = ADP + phosphate + H(+). Functionally, the RuvA-RuvB-RuvC complex processes Holliday junction (HJ) DNA during genetic recombination and DNA repair, while the RuvA-RuvB complex plays an important role in the rescue of blocked DNA replication forks via replication fork reversal (RFR). RuvA specifically binds to HJ cruciform DNA, conferring on it an open structure. The RuvB hexamer acts as an ATP-dependent pump, pulling dsDNA into and through the RuvAB complex. RuvB forms 2 homohexamers on either side of HJ DNA bound by 1 or 2 RuvA tetramers; 4 subunits per hexamer contact DNA at a time. Coordinated motions by a converter formed by DNA-disengaged RuvB subunits stimulates ATP hydrolysis and nucleotide exchange. Immobilization of the converter enables RuvB to convert the ATP-contained energy into a lever motion, pulling 2 nucleotides of DNA out of the RuvA tetramer per ATP hydrolyzed, thus driving DNA branch migration. The RuvB motors rotate together with the DNA substrate, which together with the progressing nucleotide cycle form the mechanistic basis for DNA recombination by continuous HJ branch migration. Branch migration allows RuvC to scan DNA until it finds its consensus sequence, where it cleaves and resolves cruciform DNA. This is Holliday junction branch migration complex subunit RuvB from Coxiella burnetii (strain CbuG_Q212) (Coxiella burnetii (strain Q212)).